The chain runs to 217 residues: MFLIDMFNKKTILPDAATALPGREEEIPTATTHFVSGRPLQGPYPEGMKKVLFGMGCFWGAERLLWEIPGVYVTAAGYSGGLTPNPTYQETTTGLTGHTEVVLVVYDPAKVSLQRLLKTFFEEHDPTQGMRQGNDVGTTYRSAIYVYDEEQLAEANAARNAFQKALRVYNHDREITTEIAKAGPFYFAEDYHQQYLAKNPDGYCGLRGTGVSCPIGA.

Cysteine 57 is a catalytic residue.

It belongs to the MsrA Met sulfoxide reductase family.

The catalysed reaction is L-methionyl-[protein] + [thioredoxin]-disulfide + H2O = L-methionyl-(S)-S-oxide-[protein] + [thioredoxin]-dithiol. It carries out the reaction [thioredoxin]-disulfide + L-methionine + H2O = L-methionine (S)-S-oxide + [thioredoxin]-dithiol. In terms of biological role, has an important function as a repair enzyme for proteins that have been inactivated by oxidation. Catalyzes the reversible oxidation-reduction of methionine sulfoxide in proteins to methionine. The protein is Peptide methionine sulfoxide reductase MsrA 1 (msrA1) of Rhizobium meliloti (strain 1021) (Ensifer meliloti).